A 484-amino-acid polypeptide reads, in one-letter code: MKILFAVSECTPFVKSGGLADVAGALPKALARLGNEVAVMLPKYSQIPEPWKKRMKKQAECTVAVGWRQQYCGIEHMAENDVNYYFIDNEYYFNRDSLYGHYDDGERFAFFSRAVLEAAKVVNVQADIVHTHDWHTAMVNYLLKEEYRKHPFYERMKSVLTIHNLQFQGIFPPDVTHDLLGLEMDHFHYERLECNGFVNFMKAGIIAADHVTTVSPTYRNEIMTPYYGEQLEQVLQYREDDVTGILNGIDDTFYQPKSDPYIEAQYDSGDLACKLENKTKLQQRMGLPEKNDIPLISMVTRLTKQKGLDLVRRIMHELLEEQDIQLVVLGTGEREFEDYFRYAEFAFHEKCRAYIGFDEPLAHQIYAGSDMFLMPSKFEPCGLGQLIALQYGAIPIVRETGGLYDTVRAYQEEEGTGNGFTFSAFNAHDLKFTIERALSFYCQQDVWKSIVKTAMNADYSWGKSAKEYQRIFEQVTRSGRDVLE.

K15 provides a ligand contact to ADP-alpha-D-glucose.

This sequence belongs to the glycosyltransferase 1 family. Bacterial/plant glycogen synthase subfamily.

The catalysed reaction is [(1-&gt;4)-alpha-D-glucosyl](n) + ADP-alpha-D-glucose = [(1-&gt;4)-alpha-D-glucosyl](n+1) + ADP + H(+). It functions in the pathway glycan biosynthesis; glycogen biosynthesis. Functionally, synthesizes alpha-1,4-glucan chains using ADP-glucose. This chain is Glycogen synthase (glgA), found in Bacillus subtilis (strain 168).